Consider the following 300-residue polypeptide: Transcription termination/antitermination protein NusG (300 aa).

Residues 1–99 form a disordered region; the sequence is MSDPNVNDAI…EAEEPELDPI (99 aa). Acidic residues-rich tracts occupy residues 14–41 and 47–97; these read ESVE…EAAD and ETDE…PELD.

Belongs to the NusG family.

Participates in transcription elongation, termination and antitermination. This chain is Transcription termination/antitermination protein NusG, found in Streptomyces coelicolor (strain ATCC BAA-471 / A3(2) / M145).